The chain runs to 223 residues: Neurotrophic factor BDNF precursor form (223 aa).

Residues 1-5 form the signal peptide; that stretch reads SCMKA. Positions 6 to 114 are excised as a propeptide; that stretch reads APMKEASIRG…AANMSMRVRR (109 aa). A glycan (N-linked (GlcNAc...) asparagine) is linked at Asn107. 2 disulfide bridges follow: Cys127/Cys194 and Cys172/Cys223.

This sequence belongs to the NGF-beta family.

The protein localises to the secreted. Functionally, promotes the survival of neuronal populations that are all located either in the central nervous system or directly connected to it. This Tropidophis haetianus (Haitian dwarf boa) protein is Neurotrophic factor BDNF precursor form (BDNF).